We begin with the raw amino-acid sequence, 203 residues long: Short chain dehydrogenase/reductase dpmpH (203 aa).

NADP(+) is bound by residues D23, Y77, and K81. Y77 (proton acceptor) is an active-site residue. The Lowers pKa of active site Tyr role is filled by K81.

Belongs to the short-chain dehydrogenases/reductases (SDR) family.

It participates in secondary metabolite biosynthesis; terpenoid biosynthesis. Functionally, short chain dehydrogenase/reductase; part of the gene cluster that mediates the biosynthesis of diterpenoid pyrones. The first step of the pathway is the synthesis of the alpha-pyrone moiety by the polyketide synthase dpmpA via condensation of one acetyl-CoA starter unit with 3 malonyl-CoA units and 2 methylations. The alpha-pyrone is then combined with geranylgeranyl pyrophosphate (GGPP) formed by the GGPP synthase dpmpD through the action of the prenyltransferase dpmpC to yield a linear alpha-pyrone diterpenoid. Subsequent steps in the diterpenoid pyrone biosynthetic pathway involve the decalin core formation, which is initiated by the epoxidation of the C10-C11 olefin by the FAD-dependent oxidoreductase dpmpE, and is followed by a cyclization cascade catalyzed by the terpene cyclase dpmpB. The short chain dehydrogenase/reductase dpmpG then oxidizes the 8S hydroxy group to a ketone and the short chain dehydrogenase/reductase dpmpH reduces the ketone to the 8R hydroxy group to yield higginsianin B. Higginsianin B is further methylated by the methyltransferase dpmpI to produce the intermediate named FDDP B. The cytochrome P450 monooxygenase dpmpJ then oxidizes the C-26 methyl to primary alcohol, producing the final diterpenoid pyrone with a C-26 primary alcohol on the gamma-pyrone moiety named FDDP C. In Macrophomina phaseolina (strain MS6) (Charcoal rot fungus), this protein is Short chain dehydrogenase/reductase dpmpH.